Here is a 335-residue protein sequence, read N- to C-terminus: Acetyl-coenzyme A carboxylase carboxyl transferase subunit alpha (335 aa).

In terms of domain architecture, CoA carboxyltransferase C-terminal spans 40–294 (QLETLAARRR…KEAIEKHLNA (255 aa)).

The protein belongs to the AccA family. As to quaternary structure, acetyl-CoA carboxylase is a heterohexamer composed of biotin carboxyl carrier protein (AccB), biotin carboxylase (AccC) and two subunits each of ACCase subunit alpha (AccA) and ACCase subunit beta (AccD).

The protein localises to the cytoplasm. The enzyme catalyses N(6)-carboxybiotinyl-L-lysyl-[protein] + acetyl-CoA = N(6)-biotinyl-L-lysyl-[protein] + malonyl-CoA. Its pathway is lipid metabolism; malonyl-CoA biosynthesis; malonyl-CoA from acetyl-CoA: step 1/1. Component of the acetyl coenzyme A carboxylase (ACC) complex. First, biotin carboxylase catalyzes the carboxylation of biotin on its carrier protein (BCCP) and then the CO(2) group is transferred by the carboxyltransferase to acetyl-CoA to form malonyl-CoA. The sequence is that of Acetyl-coenzyme A carboxylase carboxyl transferase subunit alpha from Prochlorococcus marinus (strain MIT 9301).